The chain runs to 191 residues: Penicillin-binding protein activator LpoB (191 aa).

The first 16 residues, 1–16, serve as a signal peptide directing secretion; it reads MKRILFVILSTMLLAS. Residue C17 is the site of N-palmitoyl cysteine attachment. C17 carries S-diacylglycerol cysteine lipidation. The segment at 25–48 is disordered; the sequence is QPAPVTPVEPKEKQETTPIEPSEK.

Belongs to the LpoB family. In terms of assembly, interacts with PBP1b.

Its subcellular location is the cell outer membrane. Its function is as follows. Regulator of peptidoglycan synthesis that is essential for the function of penicillin-binding protein 1B (PBP1b). This Xenorhabdus nematophila (strain ATCC 19061 / DSM 3370 / CCUG 14189 / LMG 1036 / NCIMB 9965 / AN6) protein is Penicillin-binding protein activator LpoB.